A 573-amino-acid chain; its full sequence is 2-succinyl-5-enolpyruvyl-6-hydroxy-3-cyclohexene-1-carboxylate synthase (573 aa).

Belongs to the TPP enzyme family. MenD subfamily. In terms of assembly, homodimer. Mg(2+) is required as a cofactor. Mn(2+) serves as cofactor. The cofactor is thiamine diphosphate.

The catalysed reaction is isochorismate + 2-oxoglutarate + H(+) = 5-enolpyruvoyl-6-hydroxy-2-succinyl-cyclohex-3-ene-1-carboxylate + CO2. It participates in quinol/quinone metabolism; 1,4-dihydroxy-2-naphthoate biosynthesis; 1,4-dihydroxy-2-naphthoate from chorismate: step 2/7. The protein operates within quinol/quinone metabolism; menaquinone biosynthesis. In terms of biological role, catalyzes the thiamine diphosphate-dependent decarboxylation of 2-oxoglutarate and the subsequent addition of the resulting succinic semialdehyde-thiamine pyrophosphate anion to isochorismate to yield 2-succinyl-5-enolpyruvyl-6-hydroxy-3-cyclohexene-1-carboxylate (SEPHCHC). The protein is 2-succinyl-5-enolpyruvyl-6-hydroxy-3-cyclohexene-1-carboxylate synthase of Shewanella sp. (strain W3-18-1).